A 202-amino-acid polypeptide reads, in one-letter code: ATP-dependent Clp protease proteolytic subunit (202 aa).

Residue Ser98 is the Nucleophile of the active site. His123 is an active-site residue.

Belongs to the peptidase S14 family. As to quaternary structure, fourteen ClpP subunits assemble into 2 heptameric rings which stack back to back to give a disk-like structure with a central cavity, resembling the structure of eukaryotic proteasomes.

The protein resides in the cytoplasm. It catalyses the reaction Hydrolysis of proteins to small peptides in the presence of ATP and magnesium. alpha-casein is the usual test substrate. In the absence of ATP, only oligopeptides shorter than five residues are hydrolyzed (such as succinyl-Leu-Tyr-|-NHMec, and Leu-Tyr-Leu-|-Tyr-Trp, in which cleavage of the -Tyr-|-Leu- and -Tyr-|-Trp bonds also occurs).. In terms of biological role, cleaves peptides in various proteins in a process that requires ATP hydrolysis. Has a chymotrypsin-like activity. Plays a major role in the degradation of misfolded proteins. The protein is ATP-dependent Clp protease proteolytic subunit of Syntrophobacter fumaroxidans (strain DSM 10017 / MPOB).